A 387-amino-acid chain; its full sequence is MLHTTPSGLLIIDKPQGVTSFDAVAAVRGALHIKKVGHAGTLDPMATGTLVIAFGHATRLLNAIVAHDKTYEATIRLGLRTTTDDAEGEVLVDDEARSRWQTLSAQLTEGGQSGEPTALPTASWQDLLTRTIATNFTGDIEQVPNTFSAIKINGQRAYDLAREGKEVELKPRPVTISEFTVLNIRSGFVAGEQAAEPLREDANTGAIPALDVDVRVSCSSGTYIRALARDLGNELGVGGYLTRLRRTRVGRFALPDDASGLIAPEAMLDTRTHTVTAHTDQKTFTNREGQTVTRNKCVLDTPEGLAGDERRNWLLDHALTMEQAARGAMPALDITPEEASELRFGRRIERTISEPTAAIVPQTHDVAAIIERANAHQAKPVTVFPLA.

Asp43 acts as the Nucleophile in catalysis.

This sequence belongs to the pseudouridine synthase TruB family. Type 1 subfamily.

The catalysed reaction is uridine(55) in tRNA = pseudouridine(55) in tRNA. Its function is as follows. Responsible for synthesis of pseudouridine from uracil-55 in the psi GC loop of transfer RNAs. This Bifidobacterium longum subsp. infantis (strain ATCC 15697 / DSM 20088 / JCM 1222 / NCTC 11817 / S12) protein is tRNA pseudouridine synthase B.